Reading from the N-terminus, the 119-residue chain is Ribonuclease P protein component (119 aa).

It belongs to the RnpA family. As to quaternary structure, consists of a catalytic RNA component (M1 or rnpB) and a protein subunit.

The enzyme catalyses Endonucleolytic cleavage of RNA, removing 5'-extranucleotides from tRNA precursor.. In terms of biological role, RNaseP catalyzes the removal of the 5'-leader sequence from pre-tRNA to produce the mature 5'-terminus. It can also cleave other RNA substrates such as 4.5S RNA. The protein component plays an auxiliary but essential role in vivo by binding to the 5'-leader sequence and broadening the substrate specificity of the ribozyme. This is Ribonuclease P protein component from Escherichia coli O6:H1 (strain CFT073 / ATCC 700928 / UPEC).